The sequence spans 159 residues: Growth arrest and DNA damage-inducible protein GADD45 gamma (159 aa).

The segment at 43-86 (VYESAKVLNVDPDNVTFCVLAAGEEDEGDIALQIHFTLIQAFCC) is homodimerization.

Belongs to the GADD45 family. As to quaternary structure, undergoes concentration-dependent homodimerization, which is required for growth inhibititory activity and enhances interaction with PCNA. Interacts with GADD45GIP1. Interacts with PCNA.

In terms of biological role, involved in the regulation of growth and apoptosis. Mediates activation of stress-responsive MTK1/MEKK4 MAPKKK. The sequence is that of Growth arrest and DNA damage-inducible protein GADD45 gamma (GADD45G) from Homo sapiens (Human).